The primary structure comprises 55 residues: uncharacterized protein (55 aa).

The chain crosses the membrane as a helical span at residues 27–44 (SFWFILISASSFLIYSLF).

Its subcellular location is the membrane. This is an uncharacterized protein from Dictyostelium discoideum (Social amoeba).